The chain runs to 420 residues: 3-oxoacyl-[acyl-carrier-protein] synthase 2 (420 aa).

Residues Phe13–Cys419 enclose the Ketosynthase family 3 (KS3) domain. Active-site for beta-ketoacyl synthase activity residues include Cys173, His314, and His349.

It belongs to the thiolase-like superfamily. Beta-ketoacyl-ACP synthases family.

The protein localises to the cytoplasm. The catalysed reaction is an ultra-long-chain di-unsaturated fatty acyl-[ACP] + malonyl-[ACP] + H(+) = a 3-oxo-ultra-long-chain di-unsaturated fatty acyl-[ACP] + holo-[ACP] + CO2. It functions in the pathway lipid metabolism; mycolic acid biosynthesis. In terms of biological role, part of the mycobacterial fatty acid elongation system FAS-II, which is involved in mycolic acid biosynthesis. Catalyzes the elongation of long chain acyl-ACP substrates by the addition of two carbons from malonyl-ACP to an acyl acceptor. Involved in extension of the mycolate chains to full lengths and produces longer chain multiunsaturated hydrocarbons averaging 54 carbons in length. The polypeptide is 3-oxoacyl-[acyl-carrier-protein] synthase 2 (kasB) (Mycobacterium leprae (strain TN)).